Reading from the N-terminus, the 822-residue chain is DNA-directed RNA polymerase subunit beta N-terminal section (822 aa).

The disordered stretch occupies residues 376-408; it reads ELTEGNPSSKSQTKNKTSASKKSKTLNVANTKG. Over residues 383 to 393 the composition is skewed to low complexity; sequence SSKSQTKNKTS.

This sequence belongs to the RNA polymerase beta chain family. In plastids the minimal PEP RNA polymerase catalytic core is composed of four subunits: alpha, beta, beta', and beta''. When a (nuclear-encoded) sigma factor is associated with the core the holoenzyme is formed, which can initiate transcription.

It is found in the plastid. Its subcellular location is the chloroplast. The enzyme catalyses RNA(n) + a ribonucleoside 5'-triphosphate = RNA(n+1) + diphosphate. Functionally, DNA-dependent RNA polymerase catalyzes the transcription of DNA into RNA using the four ribonucleoside triphosphates as substrates. In Chlamydomonas reinhardtii (Chlamydomonas smithii), this protein is DNA-directed RNA polymerase subunit beta N-terminal section (rpoB1).